Consider the following 92-residue polypeptide: UPF0298 protein BH2594 (92 aa).

Belongs to the UPF0298 family.

The protein resides in the cytoplasm. The polypeptide is UPF0298 protein BH2594 (Halalkalibacterium halodurans (strain ATCC BAA-125 / DSM 18197 / FERM 7344 / JCM 9153 / C-125) (Bacillus halodurans)).